A 437-amino-acid chain; its full sequence is Proline--tRNA ligase (437 aa).

It belongs to the class-II aminoacyl-tRNA synthetase family. ProS type 2 subfamily. Homodimer.

It is found in the cytoplasm. It carries out the reaction tRNA(Pro) + L-proline + ATP = L-prolyl-tRNA(Pro) + AMP + diphosphate. In terms of biological role, catalyzes the attachment of proline to tRNA(Pro) in a two-step reaction: proline is first activated by ATP to form Pro-AMP and then transferred to the acceptor end of tRNA(Pro). The protein is Proline--tRNA ligase of Rhizorhabdus wittichii (strain DSM 6014 / CCUG 31198 / JCM 15750 / NBRC 105917 / EY 4224 / RW1) (Sphingomonas wittichii).